The primary structure comprises 426 residues: Lipoyl synthase, mitochondrial (426 aa).

A mitochondrion-targeting transit peptide spans 1-29 (MASPAPLQRLQAPLRRSLARAAVLSSRTY). Positions 27-42 (RTYATIPSPSDPGLTQ) are enriched in polar residues. The tract at residues 27–61 (RTYATIPSPSDPGLTQSSPSPAASTTPAKKAPRPS) is disordered. Low complexity predominate over residues 43 to 55 (SSPSPAASTTPAK). 7 residues coordinate [4Fe-4S] cluster: cysteine 140, cysteine 145, cysteine 151, cysteine 171, cysteine 175, cysteine 178, and serine 388. Positions 154 to 377 (GNDKSAATAT…KQRALDMGFL (224 aa)) constitute a Radical SAM core domain.

The protein belongs to the radical SAM superfamily. Lipoyl synthase family. The cofactor is [4Fe-4S] cluster.

The protein localises to the mitochondrion. The catalysed reaction is [[Fe-S] cluster scaffold protein carrying a second [4Fe-4S](2+) cluster] + N(6)-octanoyl-L-lysyl-[protein] + 2 oxidized [2Fe-2S]-[ferredoxin] + 2 S-adenosyl-L-methionine + 4 H(+) = [[Fe-S] cluster scaffold protein] + N(6)-[(R)-dihydrolipoyl]-L-lysyl-[protein] + 4 Fe(3+) + 2 hydrogen sulfide + 2 5'-deoxyadenosine + 2 L-methionine + 2 reduced [2Fe-2S]-[ferredoxin]. Its pathway is protein modification; protein lipoylation via endogenous pathway; protein N(6)-(lipoyl)lysine from octanoyl-[acyl-carrier-protein]: step 2/2. Functionally, catalyzes the radical-mediated insertion of two sulfur atoms into the C-6 and C-8 positions of the octanoyl moiety bound to the lipoyl domains of lipoate-dependent enzymes, thereby converting the octanoylated domains into lipoylated derivatives. This Podospora anserina (strain S / ATCC MYA-4624 / DSM 980 / FGSC 10383) (Pleurage anserina) protein is Lipoyl synthase, mitochondrial.